The primary structure comprises 182 residues: ATP synthase subunit delta (182 aa).

This sequence belongs to the ATPase delta chain family. As to quaternary structure, F-type ATPases have 2 components, F(1) - the catalytic core - and F(0) - the membrane proton channel. F(1) has five subunits: alpha(3), beta(3), gamma(1), delta(1), epsilon(1). CF(0) has four main subunits: a(1), b(1), b'(1) and c(10-14). The alpha and beta chains form an alternating ring which encloses part of the gamma chain. F(1) is attached to F(0) by a central stalk formed by the gamma and epsilon chains, while a peripheral stalk is formed by the delta, b and b' chains.

It is found in the cellular thylakoid membrane. In terms of biological role, f(1)F(0) ATP synthase produces ATP from ADP in the presence of a proton or sodium gradient. F-type ATPases consist of two structural domains, F(1) containing the extramembraneous catalytic core and F(0) containing the membrane proton channel, linked together by a central stalk and a peripheral stalk. During catalysis, ATP synthesis in the catalytic domain of F(1) is coupled via a rotary mechanism of the central stalk subunits to proton translocation. This protein is part of the stalk that links CF(0) to CF(1). It either transmits conformational changes from CF(0) to CF(1) or is implicated in proton conduction. The chain is ATP synthase subunit delta from Trichodesmium erythraeum (strain IMS101).